Here is a 416-residue protein sequence, read N- to C-terminus: Catalase-peroxidase 2 (416 aa).

Residues 1-20 form the signal peptide; that stretch reads MLLPLIVFLLSVLIHHRIYS.

This sequence belongs to the peroxidase family. Peroxidase/catalase subfamily. As to quaternary structure, homodimer or homotetramer. Heme b serves as cofactor. Post-translationally, formation of the three residue Trp-Tyr-Met cross-link is important for the catalase, but not the peroxidase activity of the enzyme.

The catalysed reaction is H2O2 + AH2 = A + 2 H2O. It catalyses the reaction 2 H2O2 = O2 + 2 H2O. In terms of biological role, bifunctional enzyme with both catalase and broad-spectrum peroxidase activity. The sequence is that of Catalase-peroxidase 2 (katG2) from Alkaliphilus metalliredigens (strain QYMF).